The chain runs to 116 residues: Iron-sulfur cluster insertion protein ErpA (116 aa).

The iron-sulfur cluster site is built by C44, C108, and C110.

This sequence belongs to the HesB/IscA family. As to quaternary structure, homodimer. The cofactor is iron-sulfur cluster.

Required for insertion of 4Fe-4S clusters for at least IspG. In Pseudomonas syringae pv. syringae (strain B728a), this protein is Iron-sulfur cluster insertion protein ErpA.